A 468-amino-acid chain; its full sequence is Cysteine--tRNA ligase (468 aa).

Cys-36 is a Zn(2+) binding site. The 'HIGH' region signature appears at 38–48 (PTVYNRSHIGN). Zn(2+) is bound by residues Cys-216, His-241, and Glu-245. Positions 274-278 (KMSKS) match the 'KMSKS' region motif. Residue Lys-277 coordinates ATP.

Belongs to the class-I aminoacyl-tRNA synthetase family. In terms of assembly, monomer. The cofactor is Zn(2+).

It is found in the cytoplasm. The catalysed reaction is tRNA(Cys) + L-cysteine + ATP = L-cysteinyl-tRNA(Cys) + AMP + diphosphate. In Parvibaculum lavamentivorans (strain DS-1 / DSM 13023 / NCIMB 13966), this protein is Cysteine--tRNA ligase.